Here is a 169-residue protein sequence, read N- to C-terminus: Large ribosomal subunit protein uL10 (169 aa).

This sequence belongs to the universal ribosomal protein uL10 family. As to quaternary structure, part of the ribosomal stalk of the 50S ribosomal subunit. The N-terminus interacts with L11 and the large rRNA to form the base of the stalk. The C-terminus forms an elongated spine to which L12 dimers bind in a sequential fashion forming a multimeric L10(L12)X complex.

In terms of biological role, forms part of the ribosomal stalk, playing a central role in the interaction of the ribosome with GTP-bound translation factors. This chain is Large ribosomal subunit protein uL10, found in Orientia tsutsugamushi (strain Boryong) (Rickettsia tsutsugamushi).